Consider the following 690-residue polypeptide: Glycine--tRNA ligase beta subunit (690 aa).

Belongs to the class-II aminoacyl-tRNA synthetase family. As to quaternary structure, tetramer of two alpha and two beta subunits.

The protein localises to the cytoplasm. The enzyme catalyses tRNA(Gly) + glycine + ATP = glycyl-tRNA(Gly) + AMP + diphosphate. This is Glycine--tRNA ligase beta subunit from Desulfatibacillum aliphaticivorans.